The following is a 181-amino-acid chain: NADH-quinone oxidoreductase subunit I 2 (181 aa).

4Fe-4S ferredoxin-type domains are found at residues 44-74 (LNRY…VEGA) and 90-119 (RVYQ…MTND). Positions 54, 57, 60, 64, 99, 102, 105, and 109 each coordinate [4Fe-4S] cluster.

The protein belongs to the complex I 23 kDa subunit family. In terms of assembly, NDH-1 is composed of 14 different subunits. Subunits NuoA, H, J, K, L, M, N constitute the membrane sector of the complex. It depends on [4Fe-4S] cluster as a cofactor.

The protein resides in the cell membrane. The enzyme catalyses a quinone + NADH + 5 H(+)(in) = a quinol + NAD(+) + 4 H(+)(out). Its function is as follows. NDH-1 shuttles electrons from NADH, via FMN and iron-sulfur (Fe-S) centers, to quinones in the respiratory chain. The immediate electron acceptor for the enzyme in this species is believed to be menaquinone. Couples the redox reaction to proton translocation (for every two electrons transferred, four hydrogen ions are translocated across the cytoplasmic membrane), and thus conserves the redox energy in a proton gradient. The polypeptide is NADH-quinone oxidoreductase subunit I 2 (Mycolicibacterium paratuberculosis (strain ATCC BAA-968 / K-10) (Mycobacterium paratuberculosis)).